The chain runs to 286 residues: Phosphate import ATP-binding protein PstB (286 aa).

An ABC transporter domain is found at 40–281; sequence IAVRNLDFYY…PREQRTQEYI (242 aa). 72–79 serves as a coordination point for ATP; the sequence is GPSGCGKS.

The protein belongs to the ABC transporter superfamily. Phosphate importer (TC 3.A.1.7) family. In terms of assembly, the complex is composed of two ATP-binding proteins (PstB), two transmembrane proteins (PstC and PstA) and a solute-binding protein (PstS).

The protein resides in the cell inner membrane. It catalyses the reaction phosphate(out) + ATP + H2O = ADP + 2 phosphate(in) + H(+). Its function is as follows. Part of the ABC transporter complex PstSACB involved in phosphate import. Responsible for energy coupling to the transport system. This chain is Phosphate import ATP-binding protein PstB, found in Granulibacter bethesdensis (strain ATCC BAA-1260 / CGDNIH1).